Here is a 198-residue protein sequence, read N- to C-terminus: Dynactin subunit 5 (198 aa).

The segment covering 179–188 (NTPASKGLPS) has biased composition (polar residues). The interval 179 to 198 (NTPASKGLPSTPTKLQTTTT) is disordered. Over residues 189–198 (TPTKLQTTTT) the composition is skewed to low complexity.

Belongs to the dynactin subunits 5/6 family. Dynactin subunit 5 subfamily. As to quaternary structure, member of the pointed-end complex of the dynactin shoulder complex.

Its subcellular location is the cytoplasm. It localises to the cytoskeleton. This chain is Dynactin subunit 5 (dynE), found in Dictyostelium discoideum (Social amoeba).